A 410-amino-acid chain; its full sequence is DNA replication and repair protein RecF (410 aa).

30-37 (GPNGHGKT) provides a ligand contact to ATP.

This sequence belongs to the RecF family.

It localises to the cytoplasm. Functionally, the RecF protein is involved in DNA metabolism; it is required for DNA replication and normal SOS inducibility. RecF binds preferentially to single-stranded, linear DNA. It also seems to bind ATP. This Rhodococcus opacus (strain B4) protein is DNA replication and repair protein RecF.